The following is a 31-amino-acid chain: Cytochrome b6-f complex subunit 8 (31 aa).

The helical transmembrane segment at 5 to 25 (IVSLAWAALMVVFTFSLSLVV) threads the bilayer.

The protein belongs to the PetN family. As to quaternary structure, the 4 large subunits of the cytochrome b6-f complex are cytochrome b6, subunit IV (17 kDa polypeptide, PetD), cytochrome f and the Rieske protein, while the 4 small subunits are PetG, PetL, PetM and PetN. The complex functions as a dimer.

The protein localises to the plastid. It is found in the chloroplast thylakoid membrane. In terms of biological role, component of the cytochrome b6-f complex, which mediates electron transfer between photosystem II (PSII) and photosystem I (PSI), cyclic electron flow around PSI, and state transitions. This chain is Cytochrome b6-f complex subunit 8, found in Acorus calamus (Sweet flag).